Here is a 346-residue protein sequence, read N- to C-terminus: MSPYISPLFSITMIMSVMLISSSGHWVFMWLGLELGTLAFIPILVWWHSSLEVEATVKYFIVQAMAAAVFFLGGMVSLSGDFMGGVNQLMGNIGDMMIMLAVVTKLGLAPFHYWVVDVVQGLNYIPGAVLLTWQKVPGLAVLTQLATCNNSSMLLLFGMVSALVGGLGGLGQTQMRKLLAFSSISHLGWLVVGCVAGSLLGLSYFTLYVVLSIPLFSILHMLNGGHLNQLRTGLMFNPLMSVLLGVGFLSLGGLPPFFGFFGKWLLLTHFVGQLLLGVSVVLITGTLISLFYYLRVSYLCIVVLGPQQIMSGLNWRKMQLSGLMSGLLVLNMLGLFLVGGASCLPK.

11 consecutive transmembrane segments (helical) span residues Met1–Ser21, Trp26–Trp46, Phe60–Gly80, Met96–Val116, Leu122–Leu142, Ser151–Gly171, Leu178–Ser198, Leu199–Leu219, Val242–Gly262, Leu274–Leu294, and Leu320–Gly340.

Belongs to the complex I subunit 2 family.

Its subcellular location is the mitochondrion inner membrane. It catalyses the reaction a ubiquinone + NADH + 5 H(+)(in) = a ubiquinol + NAD(+) + 4 H(+)(out). Its function is as follows. Core subunit of the mitochondrial membrane respiratory chain NADH dehydrogenase (Complex I) that is believed to belong to the minimal assembly required for catalysis. Complex I functions in the transfer of electrons from NADH to the respiratory chain. The immediate electron acceptor for the enzyme is believed to be ubiquinone. This Branchiostoma floridae (Florida lancelet) protein is NADH-ubiquinone oxidoreductase chain 2 (ND2).